A 159-amino-acid chain; its full sequence is RNA pyrophosphohydrolase (159 aa).

One can recognise a Nudix hydrolase domain in the interval 6 to 149 (GFRPNVGIIL…KREVYRRALK (144 aa)). A Nudix box motif is present at residues 38–59 (GGINPDETPEDALYRELNEEVG).

Belongs to the Nudix hydrolase family. RppH subfamily. Requires a divalent metal cation as cofactor.

Functionally, accelerates the degradation of transcripts by removing pyrophosphate from the 5'-end of triphosphorylated RNA, leading to a more labile monophosphorylated state that can stimulate subsequent ribonuclease cleavage. In Pseudomonas fluorescens (strain ATCC BAA-477 / NRRL B-23932 / Pf-5), this protein is RNA pyrophosphohydrolase.